The primary structure comprises 291 residues: Probable 2-(5''-triphosphoribosyl)-3'-dephosphocoenzyme-A synthase (291 aa).

Belongs to the CitG/MdcB family.

It catalyses the reaction 3'-dephospho-CoA + ATP = 2'-(5''-triphospho-alpha-D-ribosyl)-3'-dephospho-CoA + adenine. Involved in the formation of 2-(5''-phosphoribosyl)-3'-dephosphocoenzyme-A, the prosthetic group of the acyl-carrier protein of the malonate decarboxylase. The polypeptide is Probable 2-(5''-triphosphoribosyl)-3'-dephosphocoenzyme-A synthase (Pseudomonas syringae pv. tomato (strain ATCC BAA-871 / DC3000)).